The primary structure comprises 425 residues: UDP-N-acetylglucosamine 1-carboxyvinyltransferase (425 aa).

Residue 22–23 participates in phosphoenolpyruvate binding; that stretch reads KN. Arg-93 contributes to the UDP-N-acetyl-alpha-D-glucosamine binding site. The active-site Proton donor is Cys-117. At Cys-117 the chain carries 2-(S-cysteinyl)pyruvic acid O-phosphothioketal. UDP-N-acetyl-alpha-D-glucosamine contacts are provided by residues 122-126, 162-165, Asp-307, and Ile-329; these read RPVDL and KVSV.

The protein belongs to the EPSP synthase family. MurA subfamily.

The protein resides in the cytoplasm. It carries out the reaction phosphoenolpyruvate + UDP-N-acetyl-alpha-D-glucosamine = UDP-N-acetyl-3-O-(1-carboxyvinyl)-alpha-D-glucosamine + phosphate. Its pathway is cell wall biogenesis; peptidoglycan biosynthesis. Functionally, cell wall formation. Adds enolpyruvyl to UDP-N-acetylglucosamine. The polypeptide is UDP-N-acetylglucosamine 1-carboxyvinyltransferase (Pasteurella multocida (strain Pm70)).